The sequence spans 354 residues: Uroporphyrinogen decarboxylase (354 aa).

Residues 27–31 (RQAGR), Asp-77, Tyr-154, Ser-209, and His-327 each bind substrate.

This sequence belongs to the uroporphyrinogen decarboxylase family. As to quaternary structure, homodimer.

It localises to the cytoplasm. The enzyme catalyses uroporphyrinogen III + 4 H(+) = coproporphyrinogen III + 4 CO2. The protein operates within porphyrin-containing compound metabolism; protoporphyrin-IX biosynthesis; coproporphyrinogen-III from 5-aminolevulinate: step 4/4. Catalyzes the decarboxylation of four acetate groups of uroporphyrinogen-III to yield coproporphyrinogen-III. In Shewanella frigidimarina (strain NCIMB 400), this protein is Uroporphyrinogen decarboxylase.